Consider the following 91-residue polypeptide: Small ribosomal subunit protein uS19 (91 aa).

Belongs to the universal ribosomal protein uS19 family.

In terms of biological role, protein S19 forms a complex with S13 that binds strongly to the 16S ribosomal RNA. The sequence is that of Small ribosomal subunit protein uS19 from Prochlorococcus marinus (strain NATL1A).